A 177-amino-acid polypeptide reads, in one-letter code: Bifunctional protein PyrR (177 aa).

Residues 99–111 carry the PRPP-binding motif; it reads LVLIDDVIYKGRT.

It belongs to the purine/pyrimidine phosphoribosyltransferase family. PyrR subfamily.

The catalysed reaction is UMP + diphosphate = 5-phospho-alpha-D-ribose 1-diphosphate + uracil. Its function is as follows. Regulates the transcription of the pyrimidine nucleotide (pyr) operon in response to exogenous pyrimidines. Also displays a weak uracil phosphoribosyltransferase activity which is not physiologically significant. The chain is Bifunctional protein PyrR from Picosynechococcus sp. (strain ATCC 27264 / PCC 7002 / PR-6) (Agmenellum quadruplicatum).